Here is a 636-residue protein sequence, read N- to C-terminus: 1-deoxy-D-xylulose-5-phosphate synthase (636 aa).

Thiamine diphosphate is bound by residues His-72 and 113 to 115; that span reads GHA. Asp-144 is a binding site for Mg(2+). Thiamine diphosphate-binding positions include 145-146, Asn-174, Tyr-287, and Glu-370; that span reads GA. Asn-174 serves as a coordination point for Mg(2+).

The protein belongs to the transketolase family. DXPS subfamily. In terms of assembly, homodimer. The cofactor is Mg(2+). Requires thiamine diphosphate as cofactor.

It carries out the reaction D-glyceraldehyde 3-phosphate + pyruvate + H(+) = 1-deoxy-D-xylulose 5-phosphate + CO2. Its pathway is metabolic intermediate biosynthesis; 1-deoxy-D-xylulose 5-phosphate biosynthesis; 1-deoxy-D-xylulose 5-phosphate from D-glyceraldehyde 3-phosphate and pyruvate: step 1/1. Functionally, catalyzes the acyloin condensation reaction between C atoms 2 and 3 of pyruvate and glyceraldehyde 3-phosphate to yield 1-deoxy-D-xylulose-5-phosphate (DXP). This chain is 1-deoxy-D-xylulose-5-phosphate synthase, found in Rippkaea orientalis (strain PCC 8801 / RF-1) (Cyanothece sp. (strain PCC 8801)).